A 622-amino-acid polypeptide reads, in one-letter code: TAF6-like RNA polymerase II p300/CBP-associated factor-associated factor 65 kDa subunit 6L (622 aa).

Disordered regions lie at residues 403–430 (QESSSGGGAEPSFGSGLPLPPGGAGPED) and 457–546 (GTGQ…TRDV). 2 positions are modified to phosphoserine: Ser-495 and Ser-501. Over residues 511 to 522 (ASASGPAASESR) the composition is skewed to low complexity. Asymmetric dimethylarginine is present on residues Arg-555, Arg-561, and Arg-593.

Belongs to the TAF6 family. As to quaternary structure, the PCAF complex is composed of a number of TBP-associated factors (TAFS), such as TAF5, TAF5L, TAF6, TAF6L, TAF9, TAF10 and TAF12, PCAF, and also PCAF-associated factors (PAFs), such as TADA2L/ADA2, TADA3L/ADA3 and SPT3. Component of the STAGA transcription coactivator-HAT complex, at least composed of SUPT3H, GCN5L2, TAF5L, TAF6L, SUPT7L, TADA3L, TAD1L, TAF10, TAF12, TRRAP and TAF9.

The protein resides in the nucleus. In terms of biological role, functions as a component of the PCAF complex. The PCAF complex is capable of efficiently acetylating histones in a nucleosomal context. The PCAF complex could be considered as the human version of the yeast SAGA complex. With TAF5L, acts as an epigenetic regulator essential for somatic reprogramming. Regulates target genes through H3K9ac deposition and MYC recruitment which trigger MYC regulatory network to orchestrate gene expression programs to control embryonic stem cell state. Functions with MYC to activate target gene expression through RNA polymerase II pause release. The polypeptide is TAF6-like RNA polymerase II p300/CBP-associated factor-associated factor 65 kDa subunit 6L (Homo sapiens (Human)).